Here is a 479-residue protein sequence, read N- to C-terminus: Anaerobic nitric oxide reductase flavorubredoxin (479 aa).

Residues 30–210 form a zinc metallo-hydrolase region; sequence LRGSSYNSYL…PFSRLVTPKI (181 aa). Residues His-79, Glu-81, Asp-83, His-147, Asp-166, and His-227 each contribute to the Fe cation site. A Flavodoxin-like domain is found at 254 to 393; that stretch reads ITIFYDTMSN…LCREHGREIA (140 aa). Residues 260-264 and 342-369 each bind FMN; these read TMSNN and AFGS…EMSL. The Rubredoxin-like domain maps to 423–474; that stretch reads GPRMQCSVCQWIYDPAKGEPMQDVAPGTPWSEVPDNFLCPECSLGKDVFDEL. Fe cation is bound by residues Cys-428, Cys-431, Cys-461, and Cys-464.

In the N-terminal section; belongs to the zinc metallo-hydrolase group 3 family. In terms of assembly, homotetramer. Fe cation is required as a cofactor. FMN serves as cofactor.

It is found in the cytoplasm. It participates in nitrogen metabolism; nitric oxide reduction. Functionally, anaerobic nitric oxide reductase; uses NADH to detoxify nitric oxide (NO), protecting several 4Fe-4S NO-sensitive enzymes. Has at least 2 reductase partners, only one of which (NorW, flavorubredoxin reductase) has been identified. NO probably binds to the di-iron center; electrons enter from the NorW at rubredoxin and are transferred sequentially to the FMN center and the di-iron center. Also able to function as an aerobic oxygen reductase. This chain is Anaerobic nitric oxide reductase flavorubredoxin, found in Escherichia coli (strain SMS-3-5 / SECEC).